Consider the following 237-residue polypeptide: tRNA1(Val) (adenine(37)-N6)-methyltransferase (237 aa).

This sequence belongs to the methyltransferase superfamily. tRNA (adenine-N(6)-)-methyltransferase family.

Its subcellular location is the cytoplasm. It catalyses the reaction adenosine(37) in tRNA1(Val) + S-adenosyl-L-methionine = N(6)-methyladenosine(37) in tRNA1(Val) + S-adenosyl-L-homocysteine + H(+). Specifically methylates the adenine in position 37 of tRNA(1)(Val) (anticodon cmo5UAC). The polypeptide is tRNA1(Val) (adenine(37)-N6)-methyltransferase (Bacteroides thetaiotaomicron (strain ATCC 29148 / DSM 2079 / JCM 5827 / CCUG 10774 / NCTC 10582 / VPI-5482 / E50)).